The primary structure comprises 126 residues: H2B.U histone 2 (126 aa).

The segment at 1 to 35 (MPEPSRSTPAPKKGSKKAITKAQKKDGKKRKRGRK) is disordered. Pro2 carries the post-translational modification N-acetylproline. Position 3 is an ADP-ribosyl glutamic acid (Glu3). ADP-ribosylserine is present on Ser7. At Lys12 the chain carries N6-(beta-hydroxybutyryl)lysine; alternate. N6-acetyllysine; alternate occurs at positions 12 and 13. Lys12 and Lys13 each carry N6-crotonyllysine; alternate. Lys12 bears the N6-lactoyllysine; alternate mark. The residue at position 13 (Lys13) is an N6-(2-hydroxyisobutyryl)lysine; alternate. Ser15 is subject to Phosphoserine; by STK4/MST1. Residues Lys16, Lys17, Lys21, and Lys24 each carry the N6-acetyllysine; alternate modification. An N6-crotonyllysine; alternate mark is found at Lys16, Lys17, Lys21, and Lys24. Lys16, Lys17, Lys21, and Lys24 each carry N6-lactoyllysine; alternate. At Lys17 the chain carries N6-glutaryllysine; alternate. Lys21 is modified (N6-(beta-hydroxybutyryl)lysine; alternate). Residues Lys21 and Lys24 each carry the N6-(2-hydroxyisobutyryl)lysine; alternate modification. An N6-butyryllysine; alternate modification is found at Lys21. Residue Lys21 forms a Glycyl lysine isopeptide (Lys-Gly) (interchain with G-Cter in SUMO2); alternate linkage. Residue Lys25 is modified to N6-(2-hydroxyisobutyryl)lysine. The residue at position 35 (Lys35) is an N6-(beta-hydroxybutyryl)lysine; alternate. At Lys35 the chain carries N6-crotonyllysine; alternate. Lys35 is modified (N6-(2-hydroxyisobutyryl)lysine; alternate). Position 35 is an N6-glutaryllysine; alternate (Lys35). Residue Lys35 is modified to N6-succinyllysine; alternate. Residue Lys35 forms a Glycyl lysine isopeptide (Lys-Gly) (interchain with G-Cter in ubiquitin); alternate linkage. The residue at position 36 (Glu36) is a PolyADP-ribosyl glutamic acid. Ser37 is modified (phosphoserine; by AMPK). Lys44 is subject to N6-lactoyllysine; alternate. Residues Lys44, Lys47, and Lys58 each carry the N6-(2-hydroxyisobutyryl)lysine; alternate modification. An N6-glutaryllysine; alternate mark is found at Lys44 and Lys47. At Lys47 the chain carries N6-methyllysine; alternate. At Lys58 the chain carries N6,N6-dimethyllysine; alternate. At Arg80 the chain carries Dimethylated arginine. At Lys86 the chain carries N6-acetyllysine; alternate. Residue Lys86 is modified to N6-lactoyllysine; alternate. Lys86 is modified (N6-(2-hydroxyisobutyryl)lysine; alternate). Lys86 bears the N6,N6,N6-trimethyllysine; alternate mark. 2 positions are modified to omega-N-methylarginine: Arg87 and Arg93. The residue at position 109 (Lys109) is an N6-(beta-hydroxybutyryl)lysine; alternate. An N6-lactoyllysine; alternate modification is found at Lys109. Lys109 bears the N6-(2-hydroxyisobutyryl)lysine; alternate mark. Lys109 carries the post-translational modification N6-glutaryllysine; alternate. Residue Lys109 is modified to N6-methyllysine; alternate. Residue Ser113 is glycosylated (O-linked (GlcNAc) serine). Residue Thr116 is modified to Phosphothreonine. Position 117 is an N6-(beta-hydroxybutyryl)lysine; alternate (Lys117). N6-lactoyllysine; alternate is present on residues Lys117 and Lys121. N6-(2-hydroxyisobutyryl)lysine; alternate is present on residues Lys117 and Lys121. Residues Lys117 and Lys121 each carry the N6-glutaryllysine; alternate modification. N6-succinyllysine; alternate is present on residues Lys117 and Lys121. Lys117 carries the N6-methylated lysine; alternate modification. Lys121 participates in a covalent cross-link: Glycyl lysine isopeptide (Lys-Gly) (interchain with G-Cter in ubiquitin); alternate.

The protein belongs to the histone H2B family. As to quaternary structure, the nucleosome is a histone octamer containing two molecules each of H2A, H2B, H3 and H4 assembled in one H3-H4 heterotetramer and two H2A-H2B heterodimers. The octamer wraps approximately 147 bp of DNA. In terms of processing, monoubiquitination at Lys-35 (H2BK34Ub) by the MSL1/MSL2 dimer is required for histone H3 'Lys-4' (H3K4me) and 'Lys-79' (H3K79me) methylation and transcription activation at specific gene loci, such as HOXA9 and MEIS1 loci. Similarly, monoubiquitination at Lys-121 (H2BK120Ub) by the RNF20/40 complex gives a specific tag for epigenetic transcriptional activation and is also prerequisite for histone H3 'Lys-4' and 'Lys-79' methylation. It also functions cooperatively with the FACT dimer to stimulate elongation by RNA polymerase II. H2BK120Ub also acts as a regulator of mRNA splicing: deubiquitination by USP49 is required for efficient cotranscriptional splicing of a large set of exons. Post-translationally, phosphorylated on Ser-15 (H2BS14ph) by STK4/MST1 during apoptosis; which facilitates apoptotic chromatin condensation. Also phosphorylated on Ser-15 in response to DNA double strand breaks (DSBs), and in correlation with somatic hypermutation and immunoglobulin class-switch recombination. Phosphorylation at Ser-37 (H2BS36ph) by AMPK in response to stress promotes transcription. GlcNAcylation at Ser-113 promotes monoubiquitination of Lys-121. It fluctuates in response to extracellular glucose, and associates with transcribed genes. In terms of processing, ADP-ribosylated by PARP1 or PARP2 on Ser-7 (H2BS6ADPr) in response to DNA damage. H2BS6ADPr promotes recruitment of CHD1L. Mono-ADP-ribosylated on Glu-3 (H2BE2ADPr) by PARP3 in response to single-strand breaks. Poly ADP-ribosylation on Glu-36 (H2BE35ADPr) by PARP1 regulates adipogenesis: it inhibits phosphorylation at Ser-37 (H2BS36ph), thereby blocking expression of pro-adipogenetic genes. Post-translationally, crotonylation (Kcr) is specifically present in male germ cells and marks testis-specific genes in post-meiotic cells, including X-linked genes that escape sex chromosome inactivation in haploid cells. Crotonylation marks active promoters and enhancers and confers resistance to transcriptional repressors. It is also associated with post-meiotically activated genes on autosomes. Hydroxybutyrylation of histones is induced by starvation. In terms of processing, lactylated in macrophages by EP300/P300 by using lactoyl-CoA directly derived from endogenous or exogenous lactate, leading to stimulates gene transcription.

Its subcellular location is the nucleus. The protein resides in the chromosome. Its function is as follows. Core component of nucleosome. Nucleosomes wrap and compact DNA into chromatin, limiting DNA accessibility to the cellular machineries which require DNA as a template. Histones thereby play a central role in transcription regulation, DNA repair, DNA replication and chromosomal stability. DNA accessibility is regulated via a complex set of post-translational modifications of histones, also called histone code, and nucleosome remodeling. This is H2B.U histone 2 from Mus musculus (Mouse).